Reading from the N-terminus, the 315-residue chain is Serpentine receptor class delta-31 (315 aa).

A run of 7 helical transmembrane segments spans residues 6–26 (LHSI…YLAI), 38–58 (AIIT…FFVM), 83–103 (ACYV…IWMI), 124–144 (VFVA…WFSI), 174–194 (ITLI…YIWI), 225–245 (FQVF…SMFT), and 256–276 (AISV…ILFV).

This sequence belongs to the nematode receptor-like protein srd family.

It is found in the membrane. The sequence is that of Serpentine receptor class delta-31 (srd-31) from Caenorhabditis elegans.